Reading from the N-terminus, the 416-residue chain is D-amino acid dehydrogenase (416 aa).

Val3–Tyr17 serves as a coordination point for FAD.

It belongs to the DadA oxidoreductase family. FAD is required as a cofactor.

It carries out the reaction a D-alpha-amino acid + A + H2O = a 2-oxocarboxylate + AH2 + NH4(+). It functions in the pathway amino-acid degradation; D-alanine degradation; NH(3) and pyruvate from D-alanine: step 1/1. Oxidative deamination of D-amino acids. The polypeptide is D-amino acid dehydrogenase (Sinorhizobium medicae (strain WSM419) (Ensifer medicae)).